The following is a 209-amino-acid chain: Isopentenyl-diphosphate Delta-isomerase (209 aa).

The Mn(2+) site is built by H31 and H38. The Nudix hydrolase domain maps to 36–171 (PLHLAFSVYI…RLLVSPWCRA (136 aa)). C73 is a catalytic residue. C73 is a binding site for Mg(2+). H75 serves as a coordination point for Mn(2+). E93 contributes to the Mg(2+) binding site. 2 residues coordinate Mn(2+): E120 and E122. E122 is an active-site residue.

The protein belongs to the IPP isomerase type 1 family. The cofactor is Mg(2+). Mn(2+) is required as a cofactor.

It localises to the cytoplasm. It carries out the reaction isopentenyl diphosphate = dimethylallyl diphosphate. It functions in the pathway isoprenoid biosynthesis; dimethylallyl diphosphate biosynthesis; dimethylallyl diphosphate from isopentenyl diphosphate: step 1/1. Functionally, catalyzes the 1,3-allylic rearrangement of the homoallylic substrate isopentenyl (IPP) to its highly electrophilic allylic isomer, dimethylallyl diphosphate (DMAPP). The sequence is that of Isopentenyl-diphosphate Delta-isomerase from Rhizobium rhizogenes (Agrobacterium rhizogenes).